The chain runs to 823 residues: Protein Jade-3 (823 aa).

The tract at residues 1-32 is disordered; that stretch reads MKRHRPVSSSDSSDESPSTSFTSGSMYRIKSK. Low complexity predominate over residues 8 to 25; sequence SSSDSSDESPSTSFTSGS. N6-acetyllysine occurs at positions 30 and 32. Position 85 is a phosphoserine (S85). A PHD-type 1 zinc finger spans residues 200–250; the sequence is DVICDVCRSPDSEEGNDMVFCDKCNVCVHQACYGILKVPEGSWLCRSCVLG. The segment at 252 to 286 adopts a C2HC pre-PHD-type zinc-finger fold; the sequence is YPQCVLCPKKGGALKTTKTGTKWAHVSCALWIPEV. Residues 310 to 366 form a PHD-type 2 zinc finger; the sequence is LVCNLCKLKTGACIQCSIKSCITAFHVTCAFEHGLEMKTILDEGDEVKFKSYCLKHS. 2 disordered regions span residues 372-395 and 542-576; these read LGEA…KTSL and KLKM…VHSI. Positions 561 to 575 are enriched in low complexity; sequence DQQPHSPDSSSSVHS. At S566 the chain carries Phosphoserine. The residue at position 601 (K601) is an N6-acetyllysine. S608 carries the post-translational modification Phosphoserine. Residues 609–630 are disordered; sequence LSHSRSEAKESSPAWRTPSSEC. K638 carries the N6-acetyllysine modification. Polar residues-rich tracts occupy residues 650-664 and 673-684; these read SSIG…SKFA and WSGNVTQKDSSS. Residues 650-684 form a disordered region; sequence SSIGNGKSQPNSKFAKSNGLEGSWSGNVTQKDSSS. Position 735 is an N6-acetyllysine (K735). Residues 758 to 823 form a disordered region; that stretch reads RAPYQENDGY…HPLSHSSMQR (66 aa). 3 positions are modified to phosphoserine: S774, S776, and S780. The span at 781-809 shows a compositional bias: basic and acidic residues; the sequence is DGNKEKVRVRKDSSDRENPPHDSRRDCHG.

This sequence belongs to the JADE family. In terms of assembly, component of the HBO1 complex composed at least of ING4 or ING5, KAT7/HBO1, MEAF6, and one of JADE1, JADE2 and JADE3. As to expression, ubiquitously expressed, with highest levels in placenta and uterus.

Scaffold subunit of some HBO1 complexes, which have a histone H4 acetyltransferase activity. This chain is Protein Jade-3 (JADE3), found in Homo sapiens (Human).